The chain runs to 149 residues: Probable microsomal glutathione S-transferase (149 aa).

The next 2 membrane-spanning stretches (helical) occupy residues S7 to W27 and L123 to L143.

It belongs to the MAPEG family.

The protein localises to the membrane. The catalysed reaction is RX + glutathione = an S-substituted glutathione + a halide anion + H(+). Functionally, may perform the conjugation of reduced glutathione to electrophiles. The polypeptide is Probable microsomal glutathione S-transferase (mgst) (Dictyostelium discoideum (Social amoeba)).